The following is a 308-amino-acid chain: Protein FdhE homolog (308 aa).

This sequence belongs to the FdhE family.

The protein resides in the cytoplasm. Functionally, necessary for formate dehydrogenase activity. This is Protein FdhE homolog from Edwardsiella ictaluri (strain 93-146).